We begin with the raw amino-acid sequence, 360 residues long: Phosphoserine aminotransferase (360 aa).

Arginine 43 contacts L-glutamate. Residues 77–78, tryptophan 103, threonine 152, aspartate 172, and glutamine 195 contribute to the pyridoxal 5'-phosphate site; that span reads AS. Position 196 is an N6-(pyridoxal phosphate)lysine (lysine 196). 237 to 238 is a binding site for pyridoxal 5'-phosphate; sequence NT.

Belongs to the class-V pyridoxal-phosphate-dependent aminotransferase family. SerC subfamily. Homodimer. It depends on pyridoxal 5'-phosphate as a cofactor.

The protein localises to the cytoplasm. It carries out the reaction O-phospho-L-serine + 2-oxoglutarate = 3-phosphooxypyruvate + L-glutamate. The enzyme catalyses 4-(phosphooxy)-L-threonine + 2-oxoglutarate = (R)-3-hydroxy-2-oxo-4-phosphooxybutanoate + L-glutamate. Its pathway is amino-acid biosynthesis; L-serine biosynthesis; L-serine from 3-phospho-D-glycerate: step 2/3. It functions in the pathway cofactor biosynthesis; pyridoxine 5'-phosphate biosynthesis; pyridoxine 5'-phosphate from D-erythrose 4-phosphate: step 3/5. Functionally, catalyzes the reversible conversion of 3-phosphohydroxypyruvate to phosphoserine and of 3-hydroxy-2-oxo-4-phosphonooxybutanoate to phosphohydroxythreonine. This chain is Phosphoserine aminotransferase, found in Syntrophobacter fumaroxidans (strain DSM 10017 / MPOB).